Reading from the N-terminus, the 225-residue chain is Peptidyl-tRNA hydrolase (225 aa).

Tyr-14 lines the tRNA pocket. The active-site Proton acceptor is His-19. Phe-64, Asn-66, and Asn-112 together coordinate tRNA. The segment at 184 to 225 (ALRMQPPKPEKPKPAAKAPEAQAPEAAPDARSALQKLADRFR) is disordered. Residues 198–210 (AAKAPEAQAPEAA) are compositionally biased toward low complexity.

This sequence belongs to the PTH family. Monomer.

It is found in the cytoplasm. It catalyses the reaction an N-acyl-L-alpha-aminoacyl-tRNA + H2O = an N-acyl-L-amino acid + a tRNA + H(+). Its function is as follows. Hydrolyzes ribosome-free peptidyl-tRNAs (with 1 or more amino acids incorporated), which drop off the ribosome during protein synthesis, or as a result of ribosome stalling. Catalyzes the release of premature peptidyl moieties from peptidyl-tRNA molecules trapped in stalled 50S ribosomal subunits, and thus maintains levels of free tRNAs and 50S ribosomes. In Cereibacter sphaeroides (strain KD131 / KCTC 12085) (Rhodobacter sphaeroides), this protein is Peptidyl-tRNA hydrolase.